A 412-amino-acid polypeptide reads, in one-letter code: 8-amino-7-oxononanoate synthase (412 aa).

106 to 107 (GY) lines the pyridoxal 5'-phosphate pocket. His131 provides a ligand contact to substrate. Residues Ser187, His219, and Thr247 each contribute to the pyridoxal 5'-phosphate site. Position 250 is an N6-(pyridoxal phosphate)lysine (Lys250). Thr370 lines the substrate pocket.

This sequence belongs to the class-II pyridoxal-phosphate-dependent aminotransferase family. BioF subfamily. As to quaternary structure, homodimer. Pyridoxal 5'-phosphate is required as a cofactor.

It carries out the reaction 6-carboxyhexanoyl-[ACP] + L-alanine + H(+) = (8S)-8-amino-7-oxononanoate + holo-[ACP] + CO2. Its pathway is cofactor biosynthesis; biotin biosynthesis. Functionally, 8-amino-7-oxononanoate synthase; part of the cluster involved in the biosynthesis of biotin (also known as vitamin B8 or vitamin H), a water-soluble vitamin that functions as a prosthetic group of many carboxylases, such as acetyl-CoA carboxylase and pyruvate carboxylase. Catalyzes the decarboxylative condensation of pimeloyl-[acyl-carrier protein] and L-alanine to produce 8-amino-7-oxononanoate (AON). The chain is 8-amino-7-oxononanoate synthase from Emericella nidulans (strain FGSC A4 / ATCC 38163 / CBS 112.46 / NRRL 194 / M139) (Aspergillus nidulans).